The chain runs to 141 residues: Nucleoside triphosphatase NudI (141 aa).

The Nudix hydrolase domain maps to 1 to 141; that stretch reads MRQRTIVCPL…RKTLRLKGLL (141 aa). A Nudix box motif is present at residues 38–59; it reads GGVEPGERIEEALRREIREELG.

It belongs to the Nudix hydrolase family. NudI subfamily. Monomer. Mg(2+) is required as a cofactor.

It catalyses the reaction a ribonucleoside 5'-triphosphate + H2O = a ribonucleoside 5'-phosphate + diphosphate + H(+). The catalysed reaction is a 2'-deoxyribonucleoside 5'-triphosphate + H2O = a 2'-deoxyribonucleoside 5'-phosphate + diphosphate + H(+). The enzyme catalyses dUTP + H2O = dUMP + diphosphate + H(+). It carries out the reaction dTTP + H2O = dTMP + diphosphate + H(+). It catalyses the reaction dCTP + H2O = dCMP + diphosphate + H(+). Functionally, catalyzes the hydrolysis of nucleoside triphosphates, with a preference for pyrimidine deoxynucleoside triphosphates (dUTP, dTTP and dCTP). The protein is Nucleoside triphosphatase NudI of Escherichia coli (strain ATCC 8739 / DSM 1576 / NBRC 3972 / NCIMB 8545 / WDCM 00012 / Crooks).